The sequence spans 446 residues: Histidine--tRNA ligase (446 aa).

The interval 403–422 is disordered; that stretch reads TASVKPLRGTGDDGEKSVQQ.

Belongs to the class-II aminoacyl-tRNA synthetase family. As to quaternary structure, homodimer.

It is found in the cytoplasm. The catalysed reaction is tRNA(His) + L-histidine + ATP = L-histidyl-tRNA(His) + AMP + diphosphate + H(+). The polypeptide is Histidine--tRNA ligase (Burkholderia thailandensis (strain ATCC 700388 / DSM 13276 / CCUG 48851 / CIP 106301 / E264)).